We begin with the raw amino-acid sequence, 133 residues long: uncharacterized protein (133 aa).

The Response regulatory domain maps to 9–128 (RILVYSDNVQ…VLGRTVLSLL (120 aa)). 4-aspartylphosphate is present on aspartate 64.

This is an uncharacterized protein from Mycobacterium tuberculosis (strain CDC 1551 / Oshkosh).